The primary structure comprises 718 residues: Threonine--tRNA ligase, mitochondrial (718 aa).

Residue S52 is modified to Phosphoserine. Residues 55 to 121 form the TGS domain; the sequence is QKEPRTIKIS…ETDSDLRFLT (67 aa).

It belongs to the class-II aminoacyl-tRNA synthetase family. Homodimer.

Its subcellular location is the mitochondrion matrix. The enzyme catalyses tRNA(Thr) + L-threonine + ATP = L-threonyl-tRNA(Thr) + AMP + diphosphate + H(+). Its function is as follows. Catalyzes the attachment of threonine to tRNA(Thr) in a two-step reaction: threonine is first activated by ATP to form Thr-AMP and then transferred to the acceptor end of tRNA(Thr). Also edits incorrectly charged tRNA(Thr) via its editing domain. The protein is Threonine--tRNA ligase, mitochondrial (TARS2) of Homo sapiens (Human).